A 131-amino-acid chain; its full sequence is uncharacterized protein (131 aa).

The disordered stretch occupies residues 99–131 (NAIQEEEIDMEQQEEKEEKPREKGKKKSVEEEF). The span at 102–113 (QEEEIDMEQQEE) shows a compositional bias: acidic residues. A compositionally biased stretch (basic and acidic residues) spans 114-131 (KEEKPREKGKKKSVEEEF).

This is an uncharacterized protein from Sulfolobus islandicus rod-shaped virus 1 (SIRV-1).